Reading from the N-terminus, the 233-residue chain is Sugar fermentation stimulation protein homolog (233 aa).

Belongs to the SfsA family.

In Chelativorans sp. (strain BNC1), this protein is Sugar fermentation stimulation protein homolog.